Reading from the N-terminus, the 140-residue chain is UPF0102 protein alr1796 (140 aa).

The protein belongs to the UPF0102 family.

This chain is UPF0102 protein alr1796, found in Nostoc sp. (strain PCC 7120 / SAG 25.82 / UTEX 2576).